A 553-amino-acid chain; its full sequence is Probable bifunctional riboflavin biosynthesis protein RIBA 2, chloroplastic (553 aa).

A chloroplast-targeting transit peptide spans 1–56; that stretch reads MASISPTSSSVAALRGHPVQFVKGGAVSKEAKGSISFSPVANSNNANVKFTGLRVA. The tract at residues 62 to 336 is DHBP synthase; that stretch reads DGAFPGDGYS…IADLIRYRRK (275 aa). The segment at 70 to 90 is disordered; sequence YSGNDNTVLPKSTSVRGQDYP. Polar residues predominate over residues 72-85; that stretch reads GNDNTVLPKSTSVR. D-ribulose 5-phosphate is bound by residues 160–161, aspartate 165, 275–279, and glutamate 299; these read RE and RAGHT. Position 161 (glutamate 161) interacts with Mg(2+). Histidine 278 is a Mg(2+) binding site. Residues 337 to 553 form a GTP cyclohydrolase II region; it reads RDRLVERSSV…TGSNGAKGEH (217 aa). 387–391 serves as a coordination point for GTP; it reads RVHSE. Zn(2+)-binding residues include cysteine 392, cysteine 403, and cysteine 405. GTP is bound by residues glutamine 408, 431-433, and threonine 453; that span reads EGR. The active-site Proton acceptor; for GTP cyclohydrolase activity is the aspartate 465. The active-site Nucleophile; for GTP cyclohydrolase activity is arginine 467. Residues threonine 488 and lysine 493 each contribute to the GTP site.

In the N-terminal section; belongs to the DHBP synthase family. This sequence in the C-terminal section; belongs to the GTP cyclohydrolase II family. Requires Mg(2+) as cofactor. It depends on Mn(2+) as a cofactor. Zn(2+) serves as cofactor.

It localises to the plastid. The protein resides in the chloroplast. The catalysed reaction is D-ribulose 5-phosphate = (2S)-2-hydroxy-3-oxobutyl phosphate + formate + H(+). It catalyses the reaction GTP + 4 H2O = 2,5-diamino-6-hydroxy-4-(5-phosphoribosylamino)-pyrimidine + formate + 2 phosphate + 3 H(+). It participates in cofactor biosynthesis; riboflavin biosynthesis; 2-hydroxy-3-oxobutyl phosphate from D-ribulose 5-phosphate: step 1/1. Its pathway is cofactor biosynthesis; riboflavin biosynthesis; 5-amino-6-(D-ribitylamino)uracil from GTP: step 1/4. Functionally, involved in riboflavin biosynthesis. Catalyzes both the conversion of D-ribulose 5-phosphate to formate and 3,4-dihydroxy-2-butanone 4-phosphate and the conversion of GTP to 2,5-diamino-6-ribosylamino-4(3H)-pyrimidinone 5'-phosphate (DARP), formate and pyrophosphate. The chain is Probable bifunctional riboflavin biosynthesis protein RIBA 2, chloroplastic (RIBA2) from Oryza sativa subsp. japonica (Rice).